The primary structure comprises 325 residues: Protease HtpX homolog 2 (325 aa).

The next 2 membrane-spanning stretches (helical) occupy residues 10 to 30 (LNMA…ALAV) and 41 to 61 (VGLI…QWLF). H147 is a Zn(2+) binding site. The active site involves E148. H151 is a Zn(2+) binding site. 2 consecutive transmembrane segments (helical) span residues 159 to 179 (LLMA…WLFW) and 196 to 216 (LVFL…LLVL). E223 is a binding site for Zn(2+).

It belongs to the peptidase M48B family. The cofactor is Zn(2+).

It is found in the cell membrane. In Saccharolobus solfataricus (strain ATCC 35092 / DSM 1617 / JCM 11322 / P2) (Sulfolobus solfataricus), this protein is Protease HtpX homolog 2.